The primary structure comprises 131 residues: Binder of sperm protein homolog 2 (131 aa).

An N-terminal signal peptide occupies residues 1-22 (MEVMSHLVHWVFLAVYMYELNA). 2 consecutive Fibronectin type-II domains span residues 35–79 (ISTD…YCTA) and 80–128 (QDPP…QCSP). 4 cysteine pairs are disulfide-bonded: Cys-40–Cys-64, Cys-54–Cys-77, Cys-85–Cys-111, and Cys-99–Cys-126.

Belongs to the seminal plasma protein family. As to expression, epididymis.

The protein resides in the secreted. Functionally, binds sperm in vitro but has no effect on sperm capacitation. Also binds gelatin and heparin, but not chondroitin sulfate B or phospholipid liposomes. The sequence is that of Binder of sperm protein homolog 2 from Mus musculus (Mouse).